Reading from the N-terminus, the 376-residue chain is Glutamate 5-kinase (376 aa).

Lys-16 contacts ATP. Ser-56, Asp-143, and Asn-155 together coordinate substrate. ATP is bound at residue 175 to 176 (TD). Residues 283 to 361 (RGALSLDEGA…RDIETTLGYV (79 aa)) enclose the PUA domain.

The protein belongs to the glutamate 5-kinase family.

It localises to the cytoplasm. The catalysed reaction is L-glutamate + ATP = L-glutamyl 5-phosphate + ADP. It functions in the pathway amino-acid biosynthesis; L-proline biosynthesis; L-glutamate 5-semialdehyde from L-glutamate: step 1/2. Its function is as follows. Catalyzes the transfer of a phosphate group to glutamate to form L-glutamate 5-phosphate. In Halorhodospira halophila (strain DSM 244 / SL1) (Ectothiorhodospira halophila (strain DSM 244 / SL1)), this protein is Glutamate 5-kinase.